The chain runs to 367 residues: Leu/Ile/Val-binding protein BraC3 (367 aa).

Residues 1–22 (MTLKTLTATLVASLAFAPLAHA) form the signal peptide.

Belongs to the leucine-binding protein family. As to quaternary structure, the complex is composed of two ATP-binding proteins (BraF and BraG), two transmembrane proteins (BraD and BraE) and a solute-binding protein (BraC or BraC3).

The protein resides in the periplasm. Functionally, part of the ABC transporter complex BraDEFGC/C3 involved in transport of branched-chain amino acids Leu, Ile and Val (LIV). Essential for the development of bacteroids, the differentiated legume-symbiotic forms of this bacterium, and for the effective N(2) fixation by them. The polypeptide is Leu/Ile/Val-binding protein BraC3 (Rhizobium johnstonii (strain DSM 114642 / LMG 32736 / 3841) (Rhizobium leguminosarum bv. viciae)).